Reading from the N-terminus, the 214-residue chain is Nucleoside triphosphate pyrophosphatase (214 aa).

Asp79 serves as the catalytic Proton acceptor.

It belongs to the Maf family. It depends on a divalent metal cation as a cofactor.

The protein resides in the cytoplasm. It catalyses the reaction a ribonucleoside 5'-triphosphate + H2O = a ribonucleoside 5'-phosphate + diphosphate + H(+). The catalysed reaction is a 2'-deoxyribonucleoside 5'-triphosphate + H2O = a 2'-deoxyribonucleoside 5'-phosphate + diphosphate + H(+). In terms of biological role, nucleoside triphosphate pyrophosphatase. May have a dual role in cell division arrest and in preventing the incorporation of modified nucleotides into cellular nucleic acids. The sequence is that of Nucleoside triphosphate pyrophosphatase from Rhodococcus jostii (strain RHA1).